Consider the following 463-residue polypeptide: Glycine--tRNA ligase (463 aa).

Residues R98 and E174 each coordinate substrate. Residues 206–208, 216–221, 290–291, and 334–337 contribute to the ATP site; these read RNE, FRTREF, EL, and GADR. 221-225 lines the substrate pocket; the sequence is FEQME. Residue 330–334 coordinates substrate; the sequence is EPSLG.

The protein belongs to the class-II aminoacyl-tRNA synthetase family. In terms of assembly, homodimer.

It is found in the cytoplasm. It carries out the reaction tRNA(Gly) + glycine + ATP = glycyl-tRNA(Gly) + AMP + diphosphate. Catalyzes the attachment of glycine to tRNA(Gly). This Staphylococcus saprophyticus subsp. saprophyticus (strain ATCC 15305 / DSM 20229 / NCIMB 8711 / NCTC 7292 / S-41) protein is Glycine--tRNA ligase.